Consider the following 566-residue polypeptide: MPYLLLFALLFVLNTPLARAASCPHWNPQQAKAEVAQLRATLARWDEHYHRQGIALVADELYDQSHERLNHLQQCFAVGTSPSPLASARGPVPHPVPHTGVDKLADRQAVARWMTGKTGVWVQPKVDGVAVSLTYQQGRLVQLTSRGDGVHGHDWSRHIPQLGAVTRQLPEAVDLHLQGELYLRLDEHVQAKAGSANARGTVAGLLARKQLTGAQGNAIGLFVWGWPHGPEQQAERLAQLARLGFPDSQLYSIAIDTLEDAAHWREHWYRSALPFATDGVILRQGSRPPAERWQAKAPYWIAAWKYPYAQALAEVRDVRFRVGRTGRVTPVLHVQPVTLDDRRITQVSLGSLARWQRLDIRPGDQVAISLAGLTIPRLEHVVHRAVERQPITAPAPDQHHAHSCWQASEGCDEQFIARLTWLGGKQGLALPRTGPGTWRRLVEAGLVTSMTDWLQLDAERLQQAPGISRLTATQMLGSFDQARSRPFDQWLRALGVPIGKHLPLTGNWQALASRSAGQWQTVPGIGAKRSRQLVEFFAASEVQAIAAQLAEAGIEGFRTPPQRIEQ.

Lys125 acts as the N6-AMP-lysine intermediate in catalysis.

It belongs to the NAD-dependent DNA ligase family. LigB subfamily.

The catalysed reaction is NAD(+) + (deoxyribonucleotide)n-3'-hydroxyl + 5'-phospho-(deoxyribonucleotide)m = (deoxyribonucleotide)n+m + AMP + beta-nicotinamide D-nucleotide.. Its function is as follows. Catalyzes the formation of phosphodiester linkages between 5'-phosphoryl and 3'-hydroxyl groups in double-stranded DNA using NAD as a coenzyme and as the energy source for the reaction. The chain is DNA ligase B from Pseudomonas putida (strain ATCC 47054 / DSM 6125 / CFBP 8728 / NCIMB 11950 / KT2440).